We begin with the raw amino-acid sequence, 233 residues long: Methyltransferase srdJ (233 aa).

The tract at residues 1–32 is disordered; the sequence is MFQVQTAGTRTGTSSPDTTTSEAGLGSTPPMP. The segment covering 9–21 has biased composition (low complexity); that stretch reads TRTGTSSPDTTTS. Trp-40, Trp-52, and Gly-81 together coordinate S-adenosyl-L-methionine. Residues 140 to 146 carry the Required for methyltransferase activity motif; sequence EISSQKY.

It belongs to the methyltransferase superfamily.

Its function is as follows. Methyltransferase; part of the gene cluster that mediates the biosynthesis of sordarial, a salicylic aldehyde structurally related to the phytotoxin pyriculol. The most interesting aspect of this pathway is formation of an aromatic product from the highly reducing polyketide synthase srdA. SrdA synthesizes a reduced polyketide chain from one molecule of acetyl-CoA and five molecules of malonyl-CoA. The polyketide chain is then reductively released as an aldehyde. The oxidoreductases srdC, srdD and srdE then oxidize one of the hydroxy groups to facilitate the intramolecular aldol condensation, followed by dehydration to yield a salicylic aldehyde. This aldehyde can undergo facile reduction by endogenous reductases to yield the alcohol 1-hydroxy-2-hydroxymethyl-3-pent-1,3-dienylbenzene. The flavin-dependent srdI counteract against the propensity of the aldehydes to be reduced under physiological conditions and is responsible for reoxidizing 1-hydroxy-2-hydroxymethyl-3-pent-1,3-dienylbenzene back to the salicylic aldehyde. This salicylic aldehyde is then selectively epoxidized by the cupin-domain-containing oxidoreductase srdB to yield the epoxide, which can be hydrolyzed stereoselectively by the hydrolase srdG to give the final product sordarial. The polypeptide is Methyltransferase srdJ (Neurospora crassa (strain ATCC 24698 / 74-OR23-1A / CBS 708.71 / DSM 1257 / FGSC 987)).